Here is a 207-residue protein sequence, read N- to C-terminus: Proteasome subunit beta (207 aa).

The propeptide at 1 to 9 (MSNKNTFEG) is removed in mature form; by autocatalysis. Threonine 10 serves as the catalytic Nucleophile.

It belongs to the peptidase T1B family. In terms of assembly, the 20S proteasome core is composed of 14 alpha and 14 beta subunits that assemble into four stacked heptameric rings, resulting in a barrel-shaped structure. The two inner rings, each composed of seven catalytic beta subunits, are sandwiched by two outer rings, each composed of seven alpha subunits. The catalytic chamber with the active sites is on the inside of the barrel. Has a gated structure, the ends of the cylinder being occluded by the N-termini of the alpha-subunits. Is capped at one or both ends by the proteasome regulatory ATPase, PAN.

The protein resides in the cytoplasm. It catalyses the reaction Cleavage of peptide bonds with very broad specificity.. With respect to regulation, the formation of the proteasomal ATPase PAN-20S proteasome complex, via the docking of the C-termini of PAN into the intersubunit pockets in the alpha-rings, triggers opening of the gate for substrate entry. Interconversion between the open-gate and close-gate conformations leads to a dynamic regulation of the 20S proteasome proteolysis activity. In terms of biological role, component of the proteasome core, a large protease complex with broad specificity involved in protein degradation. The polypeptide is Proteasome subunit beta (Methanobrevibacter ruminantium (strain ATCC 35063 / DSM 1093 / JCM 13430 / OCM 146 / M1) (Methanobacterium ruminantium)).